The primary structure comprises 398 residues: Carbamoyl phosphate synthase large chain (398 aa).

The region spanning 1 to 187 (KLGVPQPEGG…LAKIAAKVIV (187 aa)) is the ATP-grasp domain. Residues 1-255 (KLGVPQPEGG…YKAELAADNV (255 aa)) are carbamoyl phosphate synthetic domain. 10 residues coordinate ATP: Arg32, Asp71, Leu73, Glu78, Gly103, Val104, His105, Ser106, Gln146, and Glu158. Positions 146, 158, and 160 each coordinate Mg(2+). Residues Gln146, Glu158, and Asn160 each coordinate Mn(2+). The MGS-like domain maps to 254–395 (NVLPLTGKVF…NEYHKEMEEE (142 aa)). Positions 256–398 (LPLTGKVFLS…HKEMEEENKV (143 aa)) are allosteric domain.

It belongs to the CarB family. As to quaternary structure, composed of two chains; the small (or glutamine) chain promotes the hydrolysis of glutamine to ammonia, which is used by the large (or ammonia) chain to synthesize carbamoyl phosphate. Tetramer of heterodimers (alpha,beta)4. Mg(2+) is required as a cofactor. It depends on Mn(2+) as a cofactor.

It carries out the reaction hydrogencarbonate + L-glutamine + 2 ATP + H2O = carbamoyl phosphate + L-glutamate + 2 ADP + phosphate + 2 H(+). It catalyses the reaction hydrogencarbonate + NH4(+) + 2 ATP = carbamoyl phosphate + 2 ADP + phosphate + 2 H(+). Its pathway is amino-acid biosynthesis; L-arginine biosynthesis; carbamoyl phosphate from bicarbonate: step 1/1. It functions in the pathway pyrimidine metabolism; UMP biosynthesis via de novo pathway; (S)-dihydroorotate from bicarbonate: step 1/3. Its function is as follows. Large subunit of the glutamine-dependent carbamoyl phosphate synthetase (CPSase). CPSase catalyzes the formation of carbamoyl phosphate from the ammonia moiety of glutamine, carbonate, and phosphate donated by ATP, constituting the first step of 2 biosynthetic pathways, one leading to arginine and/or urea and the other to pyrimidine nucleotides. The large subunit (synthetase) binds the substrates ammonia (free or transferred from glutamine from the small subunit), hydrogencarbonate and ATP and carries out an ATP-coupled ligase reaction, activating hydrogencarbonate by forming carboxy phosphate which reacts with ammonia to form carbamoyl phosphate. This is Carbamoyl phosphate synthase large chain from Methanosarcina barkeri.